The primary structure comprises 65 residues: uncharacterized protein (65 aa).

This is an uncharacterized protein from Mycobacterium tuberculosis (strain ATCC 25618 / H37Rv).